The following is a 575-amino-acid chain: Acyloxyacyl hydrolase (575 aa).

The first 23 residues, 1 to 23 (MQSPWKILTVAPLFLLLSLQSSA), serve as a signal peptide directing secretion. The propeptide occupies 24-34 (SPANDDQSRPS). The Saposin B-type domain occupies 37 to 118 (NGHTCVGCVL…HTLEFCKQNT (82 aa)). An important for enzyme activity, localization to cytoplasmic vesicles, and protein stability region spans residues 38–70 (GHTCVGCVLVVSVIEQLAQVHNSTVQASMERLC). Intrachain disulfides connect C41–C114, C44–C108, C70–C83, C123–C453, C160–C169, C206–C230, C249–C329, and C376–C459. N-linked (GlcNAc...) asparagine glycosylation is present at N59. The lipopolysaccharide binding stretch occupies residues 173-177 (KLAME). Residues D184, D186, D188, Y190, D205, N207, D208, D210, V213, D223, D227, N229, N231, I233, and E245 each contribute to the Ca(2+) site. An N-linked (GlcNAc...) asparagine glycan is attached at N207. S263 is an active-site residue. Residues N409 and N466 are each glycosylated (N-linked (GlcNAc...) asparagine).

In terms of assembly, heterodimer of the large and small subunits; disulfide-linked. It depends on Ca(2+) as a cofactor. Cleaved into a large and a small subunit. Post-translationally, the small subunit is N-glycosylated.

It localises to the secreted. The protein resides in the cytoplasmic vesicle. It catalyses the reaction a 3-(acyloxy)acyl derivative of bacterial toxin + H2O = a 3-hydroxyacyl derivative of bacterial toxin + a fatty acid + H(+). Its activity is regulated as follows. Inhibited by EDTA. In terms of biological role, removes the secondary (acyloxyacyl-linked) fatty acyl chains from the lipid A region of bacterial lipopolysaccharides. By breaking down LPS, terminates the host response to bacterial infection and prevents prolonged and damaging inflammatory responses. In peritoneal macrophages, seems to be important for recovery from a state of immune tolerance following infection by Gram-negative bacteria. In Homo sapiens (Human), this protein is Acyloxyacyl hydrolase.